A 353-amino-acid polypeptide reads, in one-letter code: Deoxyhypusine synthase (353 aa).

Residues 90 to 94 (SNLIS), 116 to 118 (TAG), Glu122, and Asp228 each bind NAD(+). 121–122 (EE) contacts spermidine. Asp233 provides a ligand contact to spermidine. Gly275 contacts NAD(+). His280 provides a ligand contact to spermidine. 300-301 (TA) serves as a coordination point for NAD(+). Residues 306 to 308 (GSD) and 315 to 321 (EAVSWGK) contribute to the spermidine site. The active-site Nucleophile is Lys321. 334–335 (EA) contributes to the NAD(+) binding site.

This sequence belongs to the deoxyhypusine synthase family. As to quaternary structure, homotetramer. NAD(+) is required as a cofactor.

The catalysed reaction is [eIF5A protein]-L-lysine + spermidine = [eIF5A protein]-deoxyhypusine + propane-1,3-diamine. The protein operates within protein modification; eIF5A hypusination. In terms of biological role, catalyzes the NAD-dependent oxidative cleavage of spermidine and the subsequent transfer of the butylamine moiety of spermidine to the epsilon-amino group of a specific lysine residue of the eIF-5A precursor protein to form the intermediate deoxyhypusine residue. This chain is Deoxyhypusine synthase (dys-1), found in Neurospora crassa (strain ATCC 24698 / 74-OR23-1A / CBS 708.71 / DSM 1257 / FGSC 987).